A 513-amino-acid polypeptide reads, in one-letter code: Laccase (513 aa).

Plastocyanin-like domains are found at residues 45–81, 101–178, 240–318, and 378–509; these read PTRL…STHF, KTVV…HDPK, WPYL…ILAN, and QDEY…MDIT. Residues His105, His107, His153, and His155 each coordinate Cu cation. Cu cation contacts are provided by His419, His422, His424, His491, Cys492, His493, His497, and Met502.

The protein belongs to the multicopper oxidase family. As to quaternary structure, monomer. It depends on Cu(2+) as a cofactor.

Its subcellular location is the spore coat. The enzyme catalyses 4 hydroquinone + O2 = 4 benzosemiquinone + 2 H2O. It carries out the reaction 2 (4Z,15Z)-bilirubin IXalpha + O2 = 2 biliverdin IXalpha + 2 H2O. Inhibited by azide. In terms of biological role, multicopper oxidase that catalyzes the oxidation of a variety of substrates, including phenolic and non-phenolic compounds. Substrates include syringaldazine (SGZ), 2,6-dimethoxyphenol (2,6-DMP) and the non-phenolic compound 2,2'-azino-bis(3-ethylbenzothiazoline-6-sulfonic acid) (ABTS). Has no tyrosinase activity. Is implicated in the biosynthesis of a brownish pigment that characterizes sporulating colonies of B.subtilis, and which appears to be a melanin-like product and to confer protection against UV light. Functionally, in vitro, also shows strong bilirubin oxidase (BOD) activity, and can catalyze the oxidation of free bilirubin (UB), direct bilirubin (conjugated with glucuronic acid, DB) and ditaurobilirubin. In Bacillus subtilis (strain 168), this protein is Laccase.